A 162-amino-acid polypeptide reads, in one-letter code: NADH-quinone oxidoreductase subunit I 2 (162 aa).

4Fe-4S ferredoxin-type domains follow at residues 52–82 (LRRYPNGEERCIACKLCEAICPAQAITIEAG) and 93–122 (VRYDIDMVKCIYCGLCQEACPVDAIVEGPN). 8 residues coordinate [4Fe-4S] cluster: cysteine 62, cysteine 65, cysteine 68, cysteine 72, cysteine 102, cysteine 105, cysteine 108, and cysteine 112.

This sequence belongs to the complex I 23 kDa subunit family. NDH-1 is composed of 14 different subunits. Subunits NuoA, H, J, K, L, M, N constitute the membrane sector of the complex. [4Fe-4S] cluster serves as cofactor.

The protein resides in the cell inner membrane. It carries out the reaction a quinone + NADH + 5 H(+)(in) = a quinol + NAD(+) + 4 H(+)(out). Its function is as follows. NDH-1 shuttles electrons from NADH, via FMN and iron-sulfur (Fe-S) centers, to quinones in the respiratory chain. The immediate electron acceptor for the enzyme in this species is believed to be ubiquinone. Couples the redox reaction to proton translocation (for every two electrons transferred, four hydrogen ions are translocated across the cytoplasmic membrane), and thus conserves the redox energy in a proton gradient. The protein is NADH-quinone oxidoreductase subunit I 2 of Rhodopseudomonas palustris (strain HaA2).